The primary structure comprises 549 residues: Probable glucuronosyltransferase Os01g0157700 (549 aa).

At 1–16 (MDSEERSKKRLRLWSR) the chain is on the cytoplasmic side. A helical; Signal-anchor for type II membrane protein membrane pass occupies residues 17 to 37 (AVVHFSLCFAIGVFAALLPLA). Topologically, residues 38-549 (ATGATSIDSI…TPEEGKTKEG (512 aa)) are lumenal. 9 N-linked (GlcNAc...) asparagine glycosylation sites follow: asparagine 112, asparagine 139, asparagine 214, asparagine 229, asparagine 240, asparagine 251, asparagine 264, asparagine 269, and asparagine 300. The interval 232–252 (ETTWDSSSNTTQTTWDSSSNK) is disordered. The segment covering 350 to 363 (IEQATPEKESLTKG) has biased composition (basic and acidic residues). Disordered stretches follow at residues 350 to 371 (IEQATPEKESLTKGDEEESHDM), 413 to 432 (EQETPEKENLTKGEEKESHD), and 441 to 524 (KIEE…KETH). 2 N-linked (GlcNAc...) asparagine glycosylation sites follow: asparagine 421 and asparagine 452. Composition is skewed to basic and acidic residues over residues 441–465 (KIEEQETPEKENLTKGDEKESHDMM), 472–496 (KIDEQETTEKESLTKGDEKESHDMM), and 503–524 (KIEEQETPEKESLTKGDEKETH).

This sequence belongs to the glycosyltransferase 43 family.

It localises to the golgi apparatus membrane. In terms of biological role, involved in the synthesis of glucuronoxylan hemicellulose in secondary cell walls. This is Probable glucuronosyltransferase Os01g0157700 from Oryza sativa subsp. japonica (Rice).